We begin with the raw amino-acid sequence, 75 residues long: Small ribosomal subunit protein eS31 (75 aa).

Zn(2+) contacts are provided by Cys-41, Cys-44, Cys-60, and Cys-63. The C4-type zinc-finger motif lies at 41–63 (CPRCGSIMAHHLKPNERWSCGKC).

Belongs to the eukaryotic ribosomal protein eS31 family. Part of the 30S ribosomal subunit. Zn(2+) serves as cofactor.

In Saccharolobus solfataricus (strain ATCC 35092 / DSM 1617 / JCM 11322 / P2) (Sulfolobus solfataricus), this protein is Small ribosomal subunit protein eS31.